The chain runs to 582 residues: Protein NUCLEAR FUSION DEFECTIVE 4 (582 aa).

The interval 1-20 (MRPRIRDVSDKLRPNRASFD) is disordered. The next 8 membrane-spanning stretches (helical) occupy residues 46 to 66 (VLVAAIWIQASTGTNFDFSAY), 100 to 120 (IALGYFPLSVVLFAAAAMGFV), 132 to 152 (IITLPYSLVFLCCLLAGLSIC), 172 to 192 (LALSLTVSFNGISAALYSLAF), 202 to 222 (LYLLLNSLVPLVVSFAALYPV), 243 to 263 (VFTILNVLAVITSFHLLLSSS), 270 to 290 (LNFIGAVVLLVFPLCAPLLVY), and 358 to 378 (LEFWLYYIAYFCGGTIGLVYS). N-linked (GlcNAc...) asparagine glycosylation is present at asparagine 391. 5 helical membrane-spanning segments follow: residues 395 to 412 (LVTIYSSFSFFGRLLSAA), 425 to 445 (TGWFAIALLPTPIAFFLLAVS), 458 to 478 (LIGLSSGFIFAAAVSITSDLF), 489 to 509 (ILITNIPIGSLLYGYIAASIY), and 536 to 556 (TFVFWGCLSILGVVSSLSLYI).

It localises to the membrane. In terms of biological role, required for karyogamy during female gametophyte development, when the two polar nuclei fuse to form the diploid central cell nucleus. This chain is Protein NUCLEAR FUSION DEFECTIVE 4, found in Arabidopsis thaliana (Mouse-ear cress).